Consider the following 184-residue polypeptide: Troponin I, slow skeletal muscle (184 aa).

Residue P1 is modified to N-acetylproline; partial. Positions 1–45 (PEVERKSKITASRKLLKSLMLAKAKECQQEHEAREAEKVRYLAER) are involved in binding TNC. Residue S55 is modified to Phosphoserine. The segment at 94–115 (LKLKVLDLRGKFKRPPLRRVRV) is involved in binding TNC and actin.

The protein belongs to the troponin I family. Binds to actin and tropomyosin. In terms of processing, in the muscle sample, approximately 25% of the chains were blocked. Pro-1 is probably acetylated. Post-translationally, the N-terminus is blocked.

Functionally, troponin I is the inhibitory subunit of troponin, the thin filament regulatory complex which confers calcium-sensitivity to striated muscle actomyosin ATPase activity. The chain is Troponin I, slow skeletal muscle (TNNI1) from Oryctolagus cuniculus (Rabbit).